The following is a 473-amino-acid chain: MAP kinase-activated protein kinase 5 (473 aa).

The Protein kinase domain maps to 22–304; it reads INWTQKLGAG…IEGVLDHPWL (283 aa). Residues 28 to 36 and Lys51 each bind ATP; that span reads LGAGISGPV. At Ser115 the chain carries Phosphoserine; by PKA. Residue Asp148 is the Proton acceptor of the active site. Position 182 is a phosphothreonine; by MAPK11, MAPK14, MAPK4, MAPK6 and PKA (Thr182). Residues Ser212 and Ser354 each carry the phosphoserine modification. Residues 409-440 are a coiled coil; sequence ENEDEKLNEVMQEAWKYNRECKLLRDTLQSFS.

This sequence belongs to the protein kinase superfamily. CAMK Ser/Thr protein kinase family. In terms of assembly, interacts with ERK3/MAPK6 and ERK4/MAPK4 (via FRIEDE motif); the interaction is direct. Interacts with YWHAE; the interaction prevents phosphorylation of HSP27/HSPB1 leading to disrupt F-actin polymerization. Interacts with SQSTM1. In terms of processing, phosphorylated on Thr-182 ERK3/MAPK6 or ERK4/MAPK4; which is the regulatory phosphorylation site and is located on the T-loop/loop 12, leading to activation. Phosphorylation at Thr-182 by p38-alpha/MAPK14, p38-beta/MAPK11 is subject to debate. Phosphorylated at Ser-115 by PKA/PRKACA, leading to localization to the cytoplasm. Autophosphorylated. In terms of tissue distribution, expressed ubiquitously.

It localises to the cytoplasm. The protein localises to the nucleus. It catalyses the reaction L-seryl-[protein] + ATP = O-phospho-L-seryl-[protein] + ADP + H(+). It carries out the reaction L-threonyl-[protein] + ATP = O-phospho-L-threonyl-[protein] + ADP + H(+). With respect to regulation, activated following phosphorylation at Thr-182 by p38-alpha/MAPK14, p38-beta/MAPK11, ERK2/MAPK1, ERK3/MAPK6, and ERK4/MAPK4. Activated by stress-related extracellular stimuli; such as H(2)O(2), arsenite, anisomycin TNF alpha and also PMA and the calcium ionophore A23187; but to a lesser extent. In vitro, activated by SQSTM1. Inhibited by diterpenoid alkaloid noroxoaconitine. Tumor suppressor serine/threonine-protein kinase involved in mTORC1 signaling and post-transcriptional regulation. Phosphorylates FOXO3, ERK3/MAPK6, ERK4/MAPK4, HSP27/HSPB1, p53/TP53 and RHEB. Acts as a tumor suppressor by mediating Ras-induced senescence and phosphorylating p53/TP53. Involved in post-transcriptional regulation of MYC by mediating phosphorylation of FOXO3: phosphorylation of FOXO3 leads to promote nuclear localization of FOXO3, enabling expression of miR-34b and miR-34c, 2 post-transcriptional regulators of MYC that bind to the 3'UTR of MYC transcript and prevent MYC translation. Acts as a negative regulator of mTORC1 signaling by mediating phosphorylation and inhibition of RHEB. Part of the atypical MAPK signaling via its interaction with ERK3/MAPK6 or ERK4/MAPK4: the precise role of the complex formed with ERK3/MAPK6 or ERK4/MAPK4 is still unclear, but the complex follows a complex set of phosphorylation events: upon interaction with atypical MAPK (ERK3/MAPK6 or ERK4/MAPK4), ERK3/MAPK6 (or ERK4/MAPK4) is phosphorylated and then mediates phosphorylation and activation of MAPKAPK5, which in turn phosphorylates ERK3/MAPK6 (or ERK4/MAPK4). Mediates phosphorylation of HSP27/HSPB1 in response to PKA/PRKACA stimulation, inducing F-actin rearrangement. In Homo sapiens (Human), this protein is MAP kinase-activated protein kinase 5 (MAPKAPK5).